The primary structure comprises 466 residues: UDP-N-acetylmuramoylalanine--D-glutamate ligase (466 aa).

121-127 lines the ATP pocket; sequence GTNGKST.

It belongs to the MurCDEF family.

The protein localises to the cytoplasm. The enzyme catalyses UDP-N-acetyl-alpha-D-muramoyl-L-alanine + D-glutamate + ATP = UDP-N-acetyl-alpha-D-muramoyl-L-alanyl-D-glutamate + ADP + phosphate + H(+). It functions in the pathway cell wall biogenesis; peptidoglycan biosynthesis. In terms of biological role, cell wall formation. Catalyzes the addition of glutamate to the nucleotide precursor UDP-N-acetylmuramoyl-L-alanine (UMA). In Bradyrhizobium diazoefficiens (strain JCM 10833 / BCRC 13528 / IAM 13628 / NBRC 14792 / USDA 110), this protein is UDP-N-acetylmuramoylalanine--D-glutamate ligase.